We begin with the raw amino-acid sequence, 255 residues long: Expansin-A25 (255 aa).

An N-terminal signal peptide occupies residues 1–26; that stretch reads MEYAILFATSLVITVLAASGFAPAHG. The Expansin-like EG45 domain maps to 45-160; the sequence is GGACGYGNLY…QQVKCWRQGG (116 aa). The Expansin-like CBD domain occupies 170-249; the sequence is FFELVLVSNV…WWSFGMTFTS (80 aa).

The protein belongs to the expansin family. Expansin A subfamily. In terms of tissue distribution, expressed in panicles and flowers.

The protein resides in the secreted. Its subcellular location is the cell wall. It localises to the membrane. Its function is as follows. May cause loosening and extension of plant cell walls by disrupting non-covalent bonding between cellulose microfibrils and matrix glucans. No enzymatic activity has been found. May be required for rapid internodal elongation in deepwater rice during submergence. In Oryza sativa subsp. japonica (Rice), this protein is Expansin-A25 (EXPA25).